Here is a 1432-residue protein sequence, read N- to C-terminus: Probable ATP-dependent RNA helicase spindle-E (1432 aa).

In terms of domain architecture, Helicase ATP-binding spans 125–292 (MKAIRENTVV…FATKNGIPPV (168 aa)). ATP is bound at residue 138-145 (GETGCGKT). Residues 238 to 241 (DEVH) carry the DEAH box motif. The 184-residue stretch at 342–525 (VIDNMERRTE…SSVLKAKELN (184 aa)) folds into the Helicase C-terminal domain. The Tudor domain maps to 936-999 (AGSITKNLKL…RFMSNQLKRE (64 aa)).

It belongs to the DEAD box helicase family. DEAH subfamily.

It localises to the cytoplasm. It carries out the reaction ATP + H2O = ADP + phosphate + H(+). Probable ATP-binding RNA helicase which plays a central role during spermatogenesis and oogenesis by repressing transposable elements and preventing their mobilization, which is essential for the germline integrity. Acts via the piRNA metabolic process, which mediates the repression of transposable elements during meiosis by forming complexes composed of piRNAs and Piwi and govern the methylation and subsequent repression of transposons. Involved in the repression of LTR retrotransposon copia. Also involved in telomere regulation by repressing specialized telomeric retroelements HeT-A, TAHRE, and TART; Drosophila telomeres being maintained by transposition of specialized telomeric retroelements. Involved in telomeric trans-silencing, a repression mechanism by which a transposon or a transgene inserted in subtelomeric heterochromatin has the capacity to repress in trans in the female germline, a homologous transposon, or transgene located in euchromatin. Involved in the repression of testis-expressed Stellate genes by the homologous Su(Ste) repeats. Required for anteroposterior and dorsoventral axis formation during oogenesis. The polypeptide is Probable ATP-dependent RNA helicase spindle-E (spn-E) (Drosophila willistoni (Fruit fly)).